The sequence spans 354 residues: DNA polymerase IV (354 aa).

Positions 3 to 188 (VIFVDFDYFF…LDIDEIPGIG (186 aa)) constitute a UmuC domain. The Mg(2+) site is built by D7 and D105. E106 is a catalytic residue.

It belongs to the DNA polymerase type-Y family. Monomer. Mg(2+) is required as a cofactor.

The protein resides in the cytoplasm. It carries out the reaction DNA(n) + a 2'-deoxyribonucleoside 5'-triphosphate = DNA(n+1) + diphosphate. Its function is as follows. Poorly processive, error-prone DNA polymerase involved in untargeted mutagenesis. Copies undamaged DNA at stalled replication forks, which arise in vivo from mismatched or misaligned primer ends. These misaligned primers can be extended by PolIV. Exhibits no 3'-5' exonuclease (proofreading) activity. May be involved in translesional synthesis. The polypeptide is DNA polymerase IV (Sulfolobus acidocaldarius (strain ATCC 33909 / DSM 639 / JCM 8929 / NBRC 15157 / NCIMB 11770)).